Here is a 642-residue protein sequence, read N- to C-terminus: 1,4-alpha-glucan branching enzyme GlgB (642 aa).

Asp-304 acts as the Nucleophile in catalysis. Glu-355 acts as the Proton donor in catalysis.

It belongs to the glycosyl hydrolase 13 family. GlgB subfamily. In terms of assembly, monomer.

The enzyme catalyses Transfers a segment of a (1-&gt;4)-alpha-D-glucan chain to a primary hydroxy group in a similar glucan chain.. It participates in glycan biosynthesis; glycogen biosynthesis. Catalyzes the formation of the alpha-1,6-glucosidic linkages in glycogen by scission of a 1,4-alpha-linked oligosaccharide from growing alpha-1,4-glucan chains and the subsequent attachment of the oligosaccharide to the alpha-1,6 position. The sequence is that of 1,4-alpha-glucan branching enzyme GlgB from Streptococcus pneumoniae serotype 2 (strain D39 / NCTC 7466).